We begin with the raw amino-acid sequence, 40 residues long: MKVRKSLRSLKNKPGAQVVRRHGKVFVINKKDPRFKARQG.

The protein belongs to the bacterial ribosomal protein bL36 family.

This chain is Large ribosomal subunit protein bL36, found in Corynebacterium kroppenstedtii (strain DSM 44385 / JCM 11950 / CIP 105744 / CCUG 35717).